Reading from the N-terminus, the 207-residue chain is Pyridoxal 5'-phosphate synthase subunit PdxT (207 aa).

51–53 (GES) contributes to the L-glutamine binding site. Cys83 serves as the catalytic Nucleophile. Residues Arg112 and 143–144 (IR) each bind L-glutamine. Residues His184 and Glu186 each act as charge relay system in the active site.

Belongs to the glutaminase PdxT/SNO family. As to quaternary structure, in the presence of PdxS, forms a dodecamer of heterodimers. Only shows activity in the heterodimer.

It catalyses the reaction aldehydo-D-ribose 5-phosphate + D-glyceraldehyde 3-phosphate + L-glutamine = pyridoxal 5'-phosphate + L-glutamate + phosphate + 3 H2O + H(+). The catalysed reaction is L-glutamine + H2O = L-glutamate + NH4(+). The protein operates within cofactor biosynthesis; pyridoxal 5'-phosphate biosynthesis. Its function is as follows. Catalyzes the hydrolysis of glutamine to glutamate and ammonia as part of the biosynthesis of pyridoxal 5'-phosphate. The resulting ammonia molecule is channeled to the active site of PdxS. The protein is Pyridoxal 5'-phosphate synthase subunit PdxT of Kineococcus radiotolerans (strain ATCC BAA-149 / DSM 14245 / SRS30216).